Consider the following 284-residue polypeptide: 2-dehydro-3-deoxyphosphooctonate aldolase (284 aa).

This sequence belongs to the KdsA family.

Its subcellular location is the cytoplasm. The enzyme catalyses D-arabinose 5-phosphate + phosphoenolpyruvate + H2O = 3-deoxy-alpha-D-manno-2-octulosonate-8-phosphate + phosphate. It participates in carbohydrate biosynthesis; 3-deoxy-D-manno-octulosonate biosynthesis; 3-deoxy-D-manno-octulosonate from D-ribulose 5-phosphate: step 2/3. The protein operates within bacterial outer membrane biogenesis; lipopolysaccharide biosynthesis. This chain is 2-dehydro-3-deoxyphosphooctonate aldolase, found in Synechococcus sp. (strain ATCC 27144 / PCC 6301 / SAUG 1402/1) (Anacystis nidulans).